A 403-amino-acid chain; its full sequence is Phosphopentomutase (403 aa).

Positions 13, 298, 303, 339, 340, and 351 each coordinate Mn(2+).

It belongs to the phosphopentomutase family. Mn(2+) serves as cofactor.

Its subcellular location is the cytoplasm. The catalysed reaction is 2-deoxy-alpha-D-ribose 1-phosphate = 2-deoxy-D-ribose 5-phosphate. It catalyses the reaction alpha-D-ribose 1-phosphate = D-ribose 5-phosphate. The protein operates within carbohydrate degradation; 2-deoxy-D-ribose 1-phosphate degradation; D-glyceraldehyde 3-phosphate and acetaldehyde from 2-deoxy-alpha-D-ribose 1-phosphate: step 1/2. Its function is as follows. Isomerase that catalyzes the conversion of deoxy-ribose 1-phosphate (dRib-1-P) and ribose 1-phosphate (Rib-1-P) to deoxy-ribose 5-phosphate (dRib-5-P) and ribose 5-phosphate (Rib-5-P), respectively. The protein is Phosphopentomutase of Streptococcus pneumoniae (strain JJA).